Reading from the N-terminus, the 103-residue chain is Histone H4 (103 aa).

Gly residues predominate over residues 1-14 (MSGRGKGGKGLGKG). Positions 1–20 (MSGRGKGGKGLGKGGAKRHR) are disordered. Serine 2 is modified (N-acetylserine). N6-acetyl-N6-methyllysine; alternate is present on residues lysine 6 and lysine 13. Position 17 is an N6-acetyllysine (lysine 17). The DNA-binding element occupies 17–21 (KRHRK). The residue at position 21 (lysine 21) is an N6-methyllysine.

This sequence belongs to the histone H4 family. The nucleosome is a histone octamer containing two molecules each of H2A, H2B, H3 and H4 assembled in one H3-H4 heterotetramer and two H2A-H2B heterodimers. The octamer wraps approximately 147 bp of DNA.

It is found in the nucleus. The protein localises to the chromosome. In terms of biological role, core component of nucleosome. Nucleosomes wrap and compact DNA into chromatin, limiting DNA accessibility to the cellular machineries which require DNA as a template. Histones thereby play a central role in transcription regulation, DNA repair, DNA replication and chromosomal stability. DNA accessibility is regulated via a complex set of post-translational modifications of histones, also called histone code, and nucleosome remodeling. The polypeptide is Histone H4 (Holothuria tubulosa (Tubular sea cucumber)).